A 642-amino-acid chain; its full sequence is Bifunctional protein glk (642 aa).

Positions 1–340 are glucokinase; it reads MSTGAQSKAV…QLSNRSGGAS (340 aa). 23–28 is a binding site for ATP; that stretch reads ADVGGT. Residues 341–417 enclose the HTH rpiR-type domain; that stretch reads SAVFERIRQM…LKLATGLTGT (77 aa). The segment at 341 to 642 is putative HTH-type transcriptional regulator; sequence SAVFERIRQM…SPAAKDVARD (302 aa). The segment at residues 377-396 is a DNA-binding region (H-T-H motif); sequence IVDIARKADVSQPTVIRFCR. One can recognise an SIS domain in the interval 461–600; sequence AIEILNGARR…AVGVAIRRAS (140 aa). A helical membrane pass occupies residues 576-596; sequence SMISRILHLLMIDILAVGVAI.

In the N-terminal section; belongs to the bacterial glucokinase family.

Its subcellular location is the membrane. It catalyses the reaction D-glucose + ATP = D-glucose 6-phosphate + ADP + H(+). In Burkholderia orbicola (strain AU 1054), this protein is Bifunctional protein glk (glk).